The chain runs to 392 residues: Meiotically up-regulated gene 11 protein (392 aa).

It is found in the cytoplasm. The protein resides in the nucleus. In terms of biological role, has a role in meiosis. The polypeptide is Meiotically up-regulated gene 11 protein (mug11) (Schizosaccharomyces pombe (strain 972 / ATCC 24843) (Fission yeast)).